Here is a 420-residue protein sequence, read N- to C-terminus: UDP-N-acetyl-D-mannosamine dehydrogenase (420 aa).

Residues Tyr13, Ile14, Asp33, Thr85, and Thr126 each contribute to the NAD(+) site. UDP-N-acetyl-alpha-D-mannosaminouronate contacts are provided by Arg160, Val161, Lys212, Asn216, Arg219, His250, Arg252, and Gly263. Lys212 functions as the Proton donor/acceptor in the catalytic mechanism. Cys266 acts as the Nucleophile in catalysis. Residues Phe330 and Lys331 each contribute to the UDP-N-acetyl-alpha-D-mannosaminouronate site. Arg338 provides a ligand contact to NAD(+). Position 416 (Lys416) interacts with UDP-N-acetyl-alpha-D-mannosaminouronate.

The protein belongs to the UDP-glucose/GDP-mannose dehydrogenase family. WecC subfamily. In terms of assembly, homodimer.

The enzyme catalyses UDP-N-acetyl-alpha-D-mannosamine + 2 NAD(+) + H2O = UDP-N-acetyl-alpha-D-mannosaminouronate + 2 NADH + 3 H(+). It participates in bacterial outer membrane biogenesis; enterobacterial common antigen biosynthesis. Its function is as follows. Catalyzes the four-electron oxidation of UDP-N-acetyl-D-mannosamine (UDP-ManNAc), reducing NAD(+) and releasing UDP-N-acetylmannosaminuronic acid (UDP-ManNAcA). The polypeptide is UDP-N-acetyl-D-mannosamine dehydrogenase (Salmonella typhi).